Consider the following 179-residue polypeptide: tRNA (cytidine(56)-2'-O)-methyltransferase (179 aa).

Residues leucine 82, 112–116 (GAEKV), and 130–137 (VGNQPHSE) contribute to the S-adenosyl-L-methionine site.

It belongs to the aTrm56 family. Homodimer.

The protein localises to the cytoplasm. The enzyme catalyses cytidine(56) in tRNA + S-adenosyl-L-methionine = 2'-O-methylcytidine(56) in tRNA + S-adenosyl-L-homocysteine + H(+). In terms of biological role, specifically catalyzes the AdoMet-dependent 2'-O-ribose methylation of cytidine at position 56 in tRNAs. The sequence is that of tRNA (cytidine(56)-2'-O)-methyltransferase from Methanococcus maripaludis (strain DSM 14266 / JCM 13030 / NBRC 101832 / S2 / LL).